Here is a 416-residue protein sequence, read N- to C-terminus: Gasdermin-B (416 aa).

A triggers pyroptosis region spans residues 1–280 (MFSVFEEITR…EKRKDVLNSL (280 aa)). Beta stranded transmembrane passes span 83 to 101 (EFQI…VRLP) and 102 to 125 (KEIT…ENRI). (Microbial infection) Glycyl lysine isopeptide (Lys-Gly) (interchain with G-Cter in ubiquitin) cross-links involve residues Lys166, Lys177, Lys190, and Lys192. The next 2 membrane-spanning stretches (beta stranded) occupy residues 167–183 (EETL…SQIS) and 184–198 (QGHL…REVT). The segment at 229 to 250 (KSFPEEKDGASSCLGKSLGSED) is disordered. Residues 248-276 (SEDSRNMKEKLEDMESVLKDLTEEKRKDV) are a coiled coil. Residue Met308 forms a (Microbial infection) Glycyl lysine isopeptide (Lys-Gly) (interchain with G-Cter in ubiquitin) linkage.

Belongs to the gasdermin family. Homooligomer; homooligomeric ring-shaped pore complex containing 24-26 subunits when inserted in the membrane. In terms of processing, cleavage by granzyme A (GZMA) relieves autoinhibition by releasing the N-terminal moiety (Gasdermin-B, N-terminal) that initiates pyroptosis. Not cleaved by other granzymes. Major cleavage site takes places after Lys-244; a minor cleavage site takes place after Lys-229. Cleavage by neutrophil elastase ELANE, inhibits its ability to trigger pyroptosis. Palmitoylated. Post-translationally, (Microbial infection) Ubiquitinated by S.flexneri IpaH7.8, leading to its degradation by the proteasome, thereby preventing its ability to form pores in bacterial-derived membranes. In terms of tissue distribution, in the gastrointestinal tract, expressed in proliferating cells, including in the basal cell layer of esophagus and in isthmus/neck of stomach.

The protein localises to the cytoplasm. Its subcellular location is the cell membrane. The full-length protein before cleavage is inactive: intramolecular interactions between N- and C-terminal domains mediate autoinhibition in the absence of activation signal. The intrinsic pyroptosis-inducing activity is carried by the released N-terminal moiety (Gasdermin-B, N-terminal) following cleavage by granzyme A (GZMA). Its function is as follows. Precursor of a pore-forming protein that acts as a downstream mediator of granzyme-mediated cell death. This form constitutes the precursor of the pore-forming protein: upon cleavage, the released N-terminal moiety (Gasdermin-B, N-terminal) binds to membranes and forms pores, triggering pyroptosis. Also acts as a regulator of epithelial cell repair independently of programmed cell death: translocates to the plasma membrane and promotes epithelial maintenance and repair by regulating PTK2/FAK-mediated phosphorylation of PDGFA. Functionally, pore-forming protein produced by cleavage by granzyme A (GZMA), which causes membrane permeabilization and pyroptosis in target cells of cytotoxic T and natural killer (NK) cells. Key downstream mediator of granzyme-mediated cell death: (1) granzyme A (GZMA), delivered to target cells from cytotoxic T- and NK-cells, (2) specifically cleaves Gasdermin-B to generate this form. After cleavage, moves to the plasma membrane, homooligomerizes within the membrane and forms pores of 10-15 nanometers (nm) of inner diameter, triggering pyroptosis. The different isoforms recognize and bind different phospholipids on membranes, promoting cell death of different target cells. In terms of biological role, precursor of a pore-forming protein that acts as a downstream mediator of granzyme-mediated cell death and mediates pyroptosis. Following cleavage and activation by granzyme A (GZMA), the N-terminal part binds to membrane inner leaflet lipids, homooligomerizes within the human plasma membrane and forms pores of 10-15 nanometers (nm) of inner diameter, triggering pyroptosis. Recognizes and binds membrane inner leaflet lipids of human cells, such as phosphatidylinositol 4-phosphate, phosphatidylinositol 5-phosphate, bisphosphorylated phosphatidylinositols, such as phosphatidylinositol (4,5)-bisphosphate, and more weakly to phosphatidic acid. Also binds sufatide, a component of the apical membrane of epithelial cells. Precursor of a pore-forming protein that acts as a downstream mediator of granzyme-mediated cell death and mediates pyroptosis of human cells. Following cleavage and activation by granzyme A (GZMA), the N-terminal part binds to membrane inner leaflet lipids, homooligomerizes within the human plasma membrane and forms pores of 10-15 nanometers (nm) of inner diameter, triggering pyroptosis. Its function is as follows. Precursor of a pore-forming protein that acts as a downstream mediator of granzyme-mediated cell death and specifically mediates cell death of Gram-negative bacteria in response to infection. Following cleavage and activation by granzyme A (GZMA), the N-terminal part recognizes and binds phospholipids found on Gram-negative bacterial membranes, such as lipid A and cariolipin, homooligomerizes within the bacterial membranes and forms pores, triggering pyroptosis followed by cell death. In contrast to isoform 4, does not bind to membrane inner leaflet lipids of host human cell, such as phosphatidylinositol 4-phosphate, phosphatidylinositol 5-phosphate, bisphosphorylated phosphatidylinositols, such as phosphatidylinositol (4,5)-bisphosphate. Functionally, not able to trigger pyroptosis. In Homo sapiens (Human), this protein is Gasdermin-B.